The chain runs to 182 residues: Signal peptidase I (182 aa).

Over 1–13 (MTKQKEKRGRRWP) the chain is Cytoplasmic. A helical membrane pass occupies residues 14–30 (WFVAVCVVATLRLFVFS). Over 31-182 (NYVVEGKSMM…WPFKQFAFQF (152 aa)) the chain is Extracellular. Catalysis depends on residues S38 and K79.

This sequence belongs to the peptidase S26 family.

The protein resides in the cell membrane. The enzyme catalyses Cleavage of hydrophobic, N-terminal signal or leader sequences from secreted and periplasmic proteins.. The protein is Signal peptidase I (lepB) of Bacillus caldolyticus.